We begin with the raw amino-acid sequence, 247 residues long: Anionic trypsin (247 aa).

Residues 1–15 (MHPLLILAFVGAAVA) form the signal peptide. A propeptide spans 16-23 (FPSDDDDK) (activation peptide). A Peptidase S1 domain is found at 24 to 244 (IVGGYTCAEN…YVDWIQETIA (221 aa)). 6 cysteine pairs are disulfide-bonded: Cys30–Cys160, Cys48–Cys64, Cys132–Cys233, Cys139–Cys206, Cys171–Cys185, and Cys196–Cys220. His63 (charge relay system) is an active-site residue. Ca(2+) contacts are provided by Glu75, Asn77, Val80, and Glu85. Asp107 (charge relay system) is an active-site residue. The active-site Charge relay system is the Ser200.

Belongs to the peptidase S1 family. Requires Ca(2+) as cofactor. Post-translationally, not sulfated on tyrosine residue(s).

Its subcellular location is the secreted. It is found in the extracellular space. The enzyme catalyses Preferential cleavage: Arg-|-Xaa, Lys-|-Xaa.. This chain is Anionic trypsin, found in Bos taurus (Bovine).